Reading from the N-terminus, the 302-residue chain is Cardiolipin synthase (CMP-forming) (302 aa).

Residues 65–84 form a disordered region; the sequence is PRTHCSGAGKAAPEPAAGGD. Residues 71–84 are compositionally biased toward low complexity; that stretch reads GAGKAAPEPAAGGD. 5 helical membrane-spanning segments follow: residues 109 to 129, 133 to 153, 190 to 212, 250 to 270, and 271 to 289; these read IPNL…YLIL, FNVA…DGFI, IPVP…VFYV, LILV…SIYL, and QILW…YSYY.

This sequence belongs to the CDP-alcohol phosphatidyltransferase class-I family. The cofactor is a divalent metal cation.

It localises to the mitochondrion inner membrane. The enzyme catalyses a CDP-1,2-diacyl-sn-glycerol + a 1,2-diacyl-sn-glycero-3-phospho-(1'-sn-glycerol) = a cardiolipin + CMP + H(+). Its function is as follows. Catalyzes the synthesis of cardiolipin (CL) (diphosphatidylglycerol) by specifically transferring a phosphatidyl group from CDP-diacylglycerol to phosphatidylglycerol (PG). CL is a key phospholipid in mitochondrial membranes and plays important roles in maintaining the functional integrity and dynamics of mitochondria under both optimal and stress conditions. This is Cardiolipin synthase (CMP-forming) (Crls1) from Rattus norvegicus (Rat).